The sequence spans 158 residues: Large ribosomal subunit protein uL11 (158 aa).

It belongs to the universal ribosomal protein uL11 family. As to quaternary structure, part of the ribosomal stalk of the 50S ribosomal subunit. Interacts with L10 and the large rRNA to form the base of the stalk. L10 forms an elongated spine to which L12 dimers bind in a sequential fashion forming a multimeric L10(L12)X complex.

Its function is as follows. Forms part of the ribosomal stalk which helps the ribosome interact with GTP-bound translation factors. The polypeptide is Large ribosomal subunit protein uL11 (Methanosphaerula palustris (strain ATCC BAA-1556 / DSM 19958 / E1-9c)).